The primary structure comprises 235 residues: Class B acid phosphatase (235 aa).

An N-terminal signal peptide occupies residues 1-22 (MKNLVKLSLIAMLTAATLPAMA). The active-site Nucleophile is the Asp-67. Positions 67 and 69 each coordinate Mg(2+). The active-site Proton donor is the Asp-69. Substrate is bound by residues 135-136 (TG) and Lys-175. Residue Asp-190 participates in Mg(2+) binding.

Belongs to the class B bacterial acid phosphatase family. As to quaternary structure, homotetramer. Mg(2+) is required as a cofactor.

It is found in the periplasm. It catalyses the reaction a phosphate monoester + H2O = an alcohol + phosphate. Functionally, dephosphorylates several organic phosphate monoesters. Also has a phosphotransferase activity catalyzing the transfer of low-energy phosphate groups from organic phosphate monoesters to free hydroxyl groups of various organic compounds. This Aggregatibacter actinomycetemcomitans serotype C (strain D11S-1) (Actinobacillus actinomycetemcomitans) protein is Class B acid phosphatase.